Reading from the N-terminus, the 527-residue chain is Peptide chain release factor 3 (527 aa).

In terms of domain architecture, tr-type G spans 9-277 (AKRRTFAIIS…AVVDWAPRPL (269 aa)). GTP-binding positions include 18–25 (SHPDAGKT), 86–90 (DTPGH), and 140–143 (NKLD).

Belongs to the TRAFAC class translation factor GTPase superfamily. Classic translation factor GTPase family. PrfC subfamily.

It localises to the cytoplasm. Its function is as follows. Increases the formation of ribosomal termination complexes and stimulates activities of RF-1 and RF-2. It binds guanine nucleotides and has strong preference for UGA stop codons. It may interact directly with the ribosome. The stimulation of RF-1 and RF-2 is significantly reduced by GTP and GDP, but not by GMP. The protein is Peptide chain release factor 3 of Ectopseudomonas mendocina (strain ymp) (Pseudomonas mendocina).